Reading from the N-terminus, the 27-residue chain is Secretin (27 aa).

Position 27 is a methionine amide (methionine 27).

Belongs to the glucagon family.

The protein localises to the secreted. Hormone involved in different processes, such as regulation of the pH of the duodenal content, food intake and water homeostasis. Exerts its biological effects by binding to secretin receptor (SCTR), a G-protein coupled receptor expressed in the basolateral domain of several cells. The polypeptide is Secretin (Gallus gallus (Chicken)).